Reading from the N-terminus, the 105-residue chain is Large ribosomal subunit protein eL36 (105 aa).

The segment at 86–105 is disordered; that stretch reads QAGKKKRDDIANINRKASAK.

Belongs to the eukaryotic ribosomal protein eL36 family.

The polypeptide is Large ribosomal subunit protein eL36 (rpl36) (Dictyostelium discoideum (Social amoeba)).